A 589-amino-acid chain; its full sequence is Alpha-1,2-mannosyltransferase MNN22 (589 aa).

Topologically, residues 1-16 (MGSIFKDGRRILVRPK) are cytoplasmic. The chain crosses the membrane as a helical span at residues 17 to 33 (SLIICLCLISIIFTQLI). Topologically, residues 34-589 (RYQYQLIADE…NTIAWLGKKT (556 aa)) are extracellular. A disordered region spans residues 50 to 77 (EDHSSSQSLKNTKLNSTRSSSPISPPKS). Positions 54–71 (SSQSLKNTKLNSTRSSSP) are enriched in polar residues. Residues Asn-64, Asn-332, and Asn-530 are each glycosylated (N-linked (GlcNAc...) asparagine).

Belongs to the MNN1/MNT family.

Its subcellular location is the golgi apparatus membrane. Its pathway is protein modification; protein glycosylation. Its function is as follows. Alpha-1,2-mannosyltransferase required for cell wall integrity. Responsible for addition of the first alpha-1,2-linked mannose to form the branches on the mannan backbone of oligosaccharides. Addition of alpha-1,2-mannose is required for stabilization of the alpha-1,6-mannose backbone and hence regulates mannan fibril length; and is important for both immune recognition and virulence. This Candida albicans (strain SC5314 / ATCC MYA-2876) (Yeast) protein is Alpha-1,2-mannosyltransferase MNN22 (MNN22).